The chain runs to 582 residues: Membrane protein insertase YidC (582 aa).

4 helical membrane passes run 4–24, 376–396, 446–466, and 542–562; these read NTVLAVVLSMLVFGGWLYIQQ, IIPNWGVALLLLTLLMRIIFF, ASGCLPLLIQLPFLFAMFGLF, and FMPLFFFFLFYNAPSGLLLFW.

This sequence belongs to the OXA1/ALB3/YidC family. Type 1 subfamily. Interacts with the Sec translocase complex via SecD. Specifically interacts with transmembrane segments of nascent integral membrane proteins during membrane integration.

Its subcellular location is the cell inner membrane. Its function is as follows. Required for the insertion and/or proper folding and/or complex formation of integral membrane proteins into the membrane. Involved in integration of membrane proteins that insert both dependently and independently of the Sec translocase complex, as well as at least some lipoproteins. Aids folding of multispanning membrane proteins. The chain is Membrane protein insertase YidC from Treponema denticola (strain ATCC 35405 / DSM 14222 / CIP 103919 / JCM 8153 / KCTC 15104).